The sequence spans 183 residues: MSRMLNQIPRLITRSFRTSSVGYKATLGPILENKSQIQDLVNKSEWNIVDIIKFSEDEVRNIKIDSRVITKMLRASGLKDSLSEDQKKSLIRGLKLQMIFIKYLYEGDEAEFHKIEESNDDVFRLILSDHKAPKPITLKSLLSSIENLENEVDAEKGEIKSSLDISKLNGNNPTYFTVRSNKE.

The N-terminal 23 residues, 1 to 23, are a transit peptide targeting the mitochondrion; that stretch reads MSRMLNQIPRLITRSFRTSSVGY.

Belongs to the GatF family. In terms of assembly, subunit of the heterotrimeric GatFAB amidotransferase (AdT) complex, composed of A, B and F subunits.

The protein localises to the mitochondrion inner membrane. It carries out the reaction L-glutamyl-tRNA(Gln) + L-glutamine + ATP + H2O = L-glutaminyl-tRNA(Gln) + L-glutamate + ADP + phosphate + H(+). Functionally, allows the formation of correctly charged Gln-tRNA(Gln) through the transamidation of misacylated Glu-tRNA(Gln) in the mitochondria. The reaction takes place in the presence of glutamine and ATP through an activated gamma-phospho-Glu-tRNA(Gln). Required for proper protein synthesis within the mitochondrion. In Debaryomyces hansenii (strain ATCC 36239 / CBS 767 / BCRC 21394 / JCM 1990 / NBRC 0083 / IGC 2968) (Yeast), this protein is Glutamyl-tRNA(Gln) amidotransferase subunit F, mitochondrial.